Reading from the N-terminus, the 291-residue chain is Putative phosphatase MG263 (291 aa).

Aspartate 11 (nucleophile) is an active-site residue. Aspartate 11 lines the Mg(2+) pocket. Residue leucine 12 participates in phosphate binding. Position 13 (aspartate 13) interacts with Mg(2+). Phosphate-binding positions include 60 to 61 and lysine 217; that span reads TG. Aspartate 241 serves as a coordination point for Mg(2+). Phosphate is bound at residue asparagine 244.

The protein belongs to the HAD-like hydrolase superfamily. Cof family. It depends on Mg(2+) as a cofactor.

This chain is Putative phosphatase MG263, found in Mycoplasma genitalium (strain ATCC 33530 / DSM 19775 / NCTC 10195 / G37) (Mycoplasmoides genitalium).